The sequence spans 342 residues: Fatty acid desaturase 6 (342 aa).

The next 2 helical transmembrane spans lie at 39 to 59 (GVDCAILALSLLALPAGFLCL) and 63 to 83 (NILAFATGITILGVCHYTLTV). A Histidine box-1 motif is present at residues 87 to 91 (HLATH). Residues 100-120 (WSKILMIFFLEVCTAFSAEFA) form a helical membrane-spanning segment. The short motif at 124–128 (HVNLH) is the Histidine box-2 element. 2 helical membrane-spanning segments follow: residues 151–171 (YVYMFLGPLLVPIITPLVALE) and 185–205 (LGFICLGLYSQYWLFMNVSGF). The short motif at 277 to 281 (HVEHH) is the Histidine box-3 element.

The protein belongs to the fatty acid desaturase type 1 family.

It is found in the membrane. It participates in lipid metabolism; fatty acid metabolism. The polypeptide is Fatty acid desaturase 6 (Fads6) (Mus musculus (Mouse)).